Reading from the N-terminus, the 379-residue chain is Cobalt-precorrin-5B C(1)-methyltransferase (379 aa).

It belongs to the CbiD family.

The enzyme catalyses Co-precorrin-5B + S-adenosyl-L-methionine = Co-precorrin-6A + S-adenosyl-L-homocysteine. It participates in cofactor biosynthesis; adenosylcobalamin biosynthesis; cob(II)yrinate a,c-diamide from sirohydrochlorin (anaerobic route): step 6/10. In terms of biological role, catalyzes the methylation of C-1 in cobalt-precorrin-5B to form cobalt-precorrin-6A. The polypeptide is Cobalt-precorrin-5B C(1)-methyltransferase (Cyanothece sp. (strain PCC 7425 / ATCC 29141)).